Here is a 61-residue protein sequence, read N- to C-terminus: Large ribosomal subunit protein bL28 (61 aa).

This sequence belongs to the bacterial ribosomal protein bL28 family.

The protein is Large ribosomal subunit protein bL28 of Geobacillus kaustophilus (strain HTA426).